Consider the following 186-residue polypeptide: Elongation factor P (186 aa).

Belongs to the elongation factor P family.

It localises to the cytoplasm. It participates in protein biosynthesis; polypeptide chain elongation. Involved in peptide bond synthesis. Stimulates efficient translation and peptide-bond synthesis on native or reconstituted 70S ribosomes in vitro. Probably functions indirectly by altering the affinity of the ribosome for aminoacyl-tRNA, thus increasing their reactivity as acceptors for peptidyl transferase. This is Elongation factor P from Elusimicrobium minutum (strain Pei191).